Reading from the N-terminus, the 340-residue chain is MNAPRTPKPARKKPDSATPAKPVEPRKEASLHPRNRHQGRYDFPALIKTTPELAKFVITNPYGKESIDFASPDAVRVFNRALLKSFYGIQHWDIPADYLCPPVPGRADYIHFLADLLASNNDGVVPRGAIVNVLDIGMGANCVYPLIGNSEYRWHFLGSEIDPTAVAAARAIVQSNDLNKVIQLRQQENRKHILIGLLEPGERFDLTMCNPPFHASMEEATKGSERKWRALGKADPKRKLPVLNFGGQSAELWCEGGEARFVTQLIAESANFAHKVLWFSTLVSKASNLPAIETALKKAGALESQVVEMSQGQKQSRFVAWTFQTKSEQQIWRRERWVRK.

The interval 1-36 is disordered; the sequence is MNAPRTPKPARKKPDSATPAKPVEPRKEASLHPRNR.

Belongs to the methyltransferase superfamily. METTL16/RlmF family.

It is found in the cytoplasm. It carries out the reaction adenosine(1618) in 23S rRNA + S-adenosyl-L-methionine = N(6)-methyladenosine(1618) in 23S rRNA + S-adenosyl-L-homocysteine + H(+). In terms of biological role, specifically methylates the adenine in position 1618 of 23S rRNA. In Pseudomonas fluorescens (strain Pf0-1), this protein is Ribosomal RNA large subunit methyltransferase F.